We begin with the raw amino-acid sequence, 320 residues long: ATP-dependent 6-phosphofructokinase (320 aa).

G12 contributes to the ATP binding site. Position 22 to 26 (22 to 26 (RGVVR)) interacts with ADP. Residues 73 to 74 (RF) and 103 to 106 (GDGS) each bind ATP. D104 is a binding site for Mg(2+). 126-128 (TID) contacts substrate. D128 (proton acceptor) is an active-site residue. R155 serves as a coordination point for ADP. Residues R163 and 170–172 (MGR) contribute to the substrate site. ADP is bound by residues 186–188 (GCE), K212, and 214–216 (KKH). Substrate contacts are provided by residues E223, R244, and 250–253 (HIQR).

The protein belongs to the phosphofructokinase type A (PFKA) family. ATP-dependent PFK group I subfamily. Prokaryotic clade 'B1' sub-subfamily. Homotetramer. Requires Mg(2+) as cofactor.

The protein localises to the cytoplasm. The enzyme catalyses beta-D-fructose 6-phosphate + ATP = beta-D-fructose 1,6-bisphosphate + ADP + H(+). The protein operates within carbohydrate degradation; glycolysis; D-glyceraldehyde 3-phosphate and glycerone phosphate from D-glucose: step 3/4. With respect to regulation, allosterically activated by ADP and other diphosphonucleosides, and allosterically inhibited by phosphoenolpyruvate. Catalyzes the phosphorylation of D-fructose 6-phosphate to fructose 1,6-bisphosphate by ATP, the first committing step of glycolysis. The sequence is that of ATP-dependent 6-phosphofructokinase from Aliivibrio fischeri (strain ATCC 700601 / ES114) (Vibrio fischeri).